Here is a 1436-residue protein sequence, read N- to C-terminus: Pleiotropic drug resistance protein 1 (1436 aa).

The 274-residue stretch at 165–438 (LDSIHILPSK…FESMGFKCPE (274 aa)) folds into the ABC transporter 1 domain. 198 to 205 (GPPGSGKT) is an ATP binding site. Positions 516–729 (QLLKVCTERE…SVNAILVNEF (214 aa)) constitute an ABC transmembrane type-2 1 domain. Transmembrane regions (helical) follow at residues 534-554 (FVYL…MTIF), 567-587 (GGIY…NGLS), 622-642 (IPVT…VMGF), 653-673 (FLLL…IAAV), 679-699 (VAST…GFIL), 707-727 (WWIW…ILVN), and 764-784 (IGVG…SVAL). The disordered stretch occupies residues 796–826 (TISDESENNESESSPQITSTQEGDSASENKK). The segment covering 810–821 (PQITSTQEGDSA) has biased composition (polar residues). In terms of domain architecture, ABC transporter 2 spans 838–1090 (ITFDEVVYSV…HLIKYFESIP (253 aa)). 883–890 (GVSGAGKT) is a binding site for ATP. One can recognise an ABC transmembrane type-2 2 domain in the interval 1163-1377 (TQCMACLWKQ…TLYGLVASQF (215 aa)). 7 helical membrane-spanning segments follow: residues 1184-1204 (AVRL…FWDI), 1214-1234 (LVNA…QNSS), 1270-1290 (IPYI…MIGF), 1301-1321 (FFFM…TVAV), 1327-1347 (VASI…GFIV), 1358-1378 (WYYW…SQFG), and 1408-1428 (VVAA…ALGI).

It belongs to the ABC transporter superfamily. ABCG family. PDR (TC 3.A.1.205) subfamily. Roots, petals and leaf epidermis, where it is confined to glandular trichomes (at protein level).

Its subcellular location is the cell membrane. Excretes secondary metabolites such as terpenes. Involved in both constitutive and jasmonic acid-dependent induced defense. Confers some resistance to sclareol and B.cinerea. The sequence is that of Pleiotropic drug resistance protein 1 (PDR1) from Nicotiana plumbaginifolia (Leadwort-leaved tobacco).